The primary structure comprises 349 residues: tRNA pseudouridine synthase D (349 aa).

Phe27 serves as a coordination point for substrate. Catalysis depends on Asp80, which acts as the Nucleophile. Asn129 is a binding site for substrate. The region spanning 155-303 (GVPNYFGAQR…VEAARRAMLL (149 aa)) is the TRUD domain. Phe329 lines the substrate pocket.

Belongs to the pseudouridine synthase TruD family.

It carries out the reaction uridine(13) in tRNA = pseudouridine(13) in tRNA. In terms of biological role, responsible for synthesis of pseudouridine from uracil-13 in transfer RNAs. The protein is tRNA pseudouridine synthase D of Escherichia coli (strain SMS-3-5 / SECEC).